The chain runs to 322 residues: tRNA-modifying protein YgfZ (322 aa).

Trp182 is a binding site for folate.

The protein belongs to the tRNA-modifying YgfZ family.

The protein localises to the cytoplasm. In terms of biological role, folate-binding protein involved in regulating the level of ATP-DnaA and in the modification of some tRNAs. It is probably a key factor in regulatory networks that act via tRNA modification, such as initiation of chromosomal replication. The protein is tRNA-modifying protein YgfZ of Vibrio parahaemolyticus serotype O3:K6 (strain RIMD 2210633).